The primary structure comprises 111 residues: Phosphoribosyl-ATP pyrophosphatase (111 aa).

Belongs to the PRA-PH family.

The protein resides in the cytoplasm. It carries out the reaction 1-(5-phospho-beta-D-ribosyl)-ATP + H2O = 1-(5-phospho-beta-D-ribosyl)-5'-AMP + diphosphate + H(+). Its pathway is amino-acid biosynthesis; L-histidine biosynthesis; L-histidine from 5-phospho-alpha-D-ribose 1-diphosphate: step 2/9. The sequence is that of Phosphoribosyl-ATP pyrophosphatase (hisE) from Azospirillum brasilense.